We begin with the raw amino-acid sequence, 1657 residues long: MSAADEVDGLGVARPHYGSVLDNERLTAEEMDERRRQNVAYEYLCHLEEAKRWMEACLGEDLPPTTELEEGLRNGVYLAKLGNFFSPKVVSLKKIYDREQTRYKATGLHFRHTDNVIQWLNAMDEIGLPKIFYPETTDIYDRKNMPRCIYCIHALSLYLFKLGLAPQIQDLYGKVDFTEEEINNMKTELEKYGIQMPAFSKIGGILANELSVDEAALHAAVIAINEAIDRRIPADTFAALKNPNAMLVNLEEPLASTYQDILYQAKQDKMTNAKNRTENSERERDVYEELLTQAEIQGNINKVNTFSALANIDLALEQGDALALFRALQSPALGLRGLQQQNSDWYLKQLLSDKQQKRQSGQTDPLQKEELQSGVDAANSAAQQYQRRLAAVALINAAIQKGVAEKTVLELMNPEAQLPQVYPFAADLYQKELATLQRQSPEHNLTHPELSVAVEMLSSVALINRALESGDVNTVWKQLSSSVTGLTNIEEENCQRYLDELMKLKAQAHAENNEFITWNDIQACVDHVNLVVQEEHERILAIGLINEALDEGDAQKTLQALQIPAAKLEGVLAEVAQHYQDTLIRAKREKAQEIQDESAVLWLDEIQGGIWQSNKDTQEAQKFALGIFAINEAVESGDVGKTLSALRSPDVGLYGVIPECGETYHSDLAEAKKKKLAVGDNNSKWVKHWVKGGYYYYHNLETQEGGWDEPPNFVQNSMQLSREEIQSSISGVTAAYNREQLWLANEGLITRLQARCRGYLVRQEFRSRMNFLKKQIPAITCIQSQWRGYKQKKAYQDRLAYLRSHKDEVVKIQSLARMHQARKRYRDRLQYFRDHINDIIKIQAFIRANKARDDYKTLINAEDPPMVVVRKFVHLLDQSDQDFQEELDLMKMREEVITLIRSNQQLENDLNLMDIKIGLLVKNKITLQDVVSHSKKLTKKNKEQLSDMMMINKQKGGLKALSKEKREKLEAYQHLFYLLQTNPTYLAKLIFQMPQNKSTKFMDSVIFTLYNYASNQREEYLLLRLFKTALQEEIKSKVDQIQEIVTGNPTVIKMVVSFNRGARGQNALRQILAPVVKEIMDDKSLNIKTDPVDIYKSWVNQMESQTGEASKLPYDVTPEQALAHEEVKTRLDSSIRNMRAVTDKFLSAIVSSVDKIPYGMRFIAKVLKDSLHEKFPDAGEDELLKIIGNLLYYRYMNPAIVAPDAFDIIDLSAGGQLTTDQRRNLGSIAKMLQHAASNKMFLGDNAHLSIINEYLSQSYQKFRRFFQTACDVPELQDKFNVDEYSDLVTLTKPVIYISIGEIINTHTLLLDHQDAIAPEHNDPIHELLDDLGEVPTIESLIGESSGNLNDPNKEALAKTEVSLTLTNKFDVPGDENAEMDARTILLNTKRLIVDVIRFQPGETLTEILETPATSEQEAEHQRAMQRRAIRDAKTPDKMKKSKSVKEDSNLTLQEKKEKIQTGLKKLTELGTVDPKNKYQELINDIARDIRNQRRYRQRRKAELVKLQQTYAALNSKATFYGEQVDYYKSYIKTCLDNLASKGKVSKKPREMKGKKSKKISLKYTAARLHEKGVLLEIEDLQVNQFKNVIFEISPTEEVGDFEVKAKFMGVQMETFMLHYQDLLQLQYEGVAVMKLFDRAKVNVNLLIFLLNKKFYGK.

Serine 2 carries the post-translational modification N-acetylserine. Serine 2 carries the phosphoserine modification. The region spanning 44 to 159 (LCHLEEAKRW…YCIHALSLYL (116 aa)) is the Calponin-homology (CH) domain. Tyrosine 172 carries the post-translational modification Phosphotyrosine. Serine 330 is modified (phosphoserine). One can recognise a WW domain in the interval 679–712 (GDNNSKWVKHWVKGGYYYYHNLETQEGGWDEPPN). 4 IQ domains span residues 745–774 (NEGLITRLQARCRGYLVRQEFRSRMNFLKK), 775–804 (QIPAITCIQSQWRGYKQKKAYQDRLAYLRS), 805–834 (HKDEVVKIQSLARMHQARKRYRDRLQYFRD), and 835–864 (HINDIIKIQAFIRANKARDDYKTLINAEDP). The segment at 956–1274 (GGLKALSKEK…FFQTACDVPE (319 aa)) is C1. In terms of domain architecture, Ras-GAP spans 1020 to 1269 (YLLLRLFKTA…QKFRRFFQTA (250 aa)). The interval 1276–1657 (QDKFNVDEYS…FLLNKKFYGK (382 aa)) is C2. The tract at residues 1410 to 1448 (TPATSEQEAEHQRAMQRRAIRDAKTPDKMKKSKSVKEDS) is disordered. Basic and acidic residues predominate over residues 1417-1448 (EAEHQRAMQRRAIRDAKTPDKMKKSKSVKEDS). Phosphoserine; by PKC is present on serine 1441. Serine 1443 carries the phosphoserine; by PKC/PRKCE modification.

In terms of assembly, interacts with CDC42; the interaction is demonstrated with IQGAP1 in GTP-bound and in nucleotide-free state. Interacts with RAC1. Does not interact with RHOA. Interacts with TSG101. Interacts with PAK6. Interacts with TMEM14B; this interaction increases IQGAP1 phosphorylation and induces its nuclear translocation. Interacts with SASH1. Interacts with PJVK. Interacts with SLC26A4; this interaction enhances the chloride-bicarbonate exchange activity of SLC26A4. Interacts with SVEP1. Interacts with ILK; the interaction is required for localization of IQGAP to the cell cortex. As to quaternary structure, (Microbial infection) Interacts with ebolavirus vp40. (Microbial infection) Interacts with human cytomegalovirus protein UL5. In terms of assembly, (Microbial infection) Interacts with C.jejuni invasion antigen D (CiaD). Post-translationally, phosphorylation of Ser-1443 by PKC/PRKCE prevents interaction between C1 and C2, allowing binding of nucleotide-free CDC42. Ser-1443 phosphorylation enhances the ability to promote neurite outgrowth. As to expression, expressed in the placenta, lung, and kidney. A lower level expression is seen in the heart, liver, skeletal muscle and pancreas.

The protein localises to the cell membrane. It localises to the nucleus. It is found in the cytoplasm. Its subcellular location is the cell cortex. The protein resides in the apical cell membrane. The protein localises to the basolateral cell membrane. Its function is as follows. Plays a crucial role in regulating the dynamics and assembly of the actin cytoskeleton. Recruited to the cell cortex by interaction with ILK which allows it to cooperate with its effector DIAPH1 to locally stabilize microtubules and allow stable insertion of caveolae into the plasma membrane. Binds to activated CDC42 but does not stimulate its GTPase activity. Associates with calmodulin. May promote neurite outgrowth. May play a possible role in cell cycle regulation by contributing to cell cycle progression after DNA replication arrest. This chain is Ras GTPase-activating-like protein IQGAP1 (IQGAP1), found in Homo sapiens (Human).